We begin with the raw amino-acid sequence, 323 residues long: Fos-related antigen 2 (323 aa).

The segment covering 1-27 has biased composition (low complexity); the sequence is MYQDYPGSFDTSSRGSSGSPGHPEPYS. Residues 1 to 31 are disordered; that stretch reads MYQDYPGSFDTSSRGSSGSPGHPEPYSAGAA. The bZIP domain occupies 124–187; sequence EEKRRIRRER…EKLEFMLVAH (64 aa). Residues 126–128 are basic motif; sequence KRR. Residues 129–136 form a leucine-zipper region; sequence IRRERNKL. Disordered stretches follow at residues 194–214 and 288–323; these read SPEE…TGAS and ESPL…LLAL. A compositionally biased stretch (low complexity) spans 305–317; the sequence is SSSGDQSSDSLNS.

This sequence belongs to the bZIP family. Fos subfamily. Heterodimer with JUN.

It is found in the nucleus. This Gallus gallus (Chicken) protein is Fos-related antigen 2 (FOSL2).